We begin with the raw amino-acid sequence, 1070 residues long: DNA-directed RNA polymerase subunit beta (1070 aa).

The protein belongs to the RNA polymerase beta chain family. In plastids the minimal PEP RNA polymerase catalytic core is composed of four subunits: alpha, beta, beta', and beta''. When a (nuclear-encoded) sigma factor is associated with the core the holoenzyme is formed, which can initiate transcription.

Its subcellular location is the plastid. It is found in the chloroplast. It catalyses the reaction RNA(n) + a ribonucleoside 5'-triphosphate = RNA(n+1) + diphosphate. Its function is as follows. DNA-dependent RNA polymerase catalyzes the transcription of DNA into RNA using the four ribonucleoside triphosphates as substrates. In Buxus microphylla (Littleleaf boxwood), this protein is DNA-directed RNA polymerase subunit beta.